We begin with the raw amino-acid sequence, 452 residues long: Glutamyl-tRNA(Gln) amidotransferase subunit A (452 aa).

Residues K56 and S131 each act as charge relay system in the active site. The active-site Acyl-ester intermediate is the S155.

This sequence belongs to the amidase family. GatA subfamily. As to quaternary structure, heterotrimer of A, B and C subunits.

It carries out the reaction L-glutamyl-tRNA(Gln) + L-glutamine + ATP + H2O = L-glutaminyl-tRNA(Gln) + L-glutamate + ADP + phosphate + H(+). In terms of biological role, allows the formation of correctly charged Gln-tRNA(Gln) through the transamidation of misacylated Glu-tRNA(Gln) in organisms which lack glutaminyl-tRNA synthetase. The reaction takes place in the presence of glutamine and ATP through an activated gamma-phospho-Glu-tRNA(Gln). The sequence is that of Glutamyl-tRNA(Gln) amidotransferase subunit A from Campylobacter hominis (strain ATCC BAA-381 / DSM 21671 / CCUG 45161 / LMG 19568 / NCTC 13146 / CH001A).